The sequence spans 44 residues: Thymosin beta-10 (44 aa).

Basic and acidic residues-rich tracts occupy residues 1–25 and 33–44; these read MADKPDMGEIASFDKAKLKKTETQE and ETIEQEKRSEIS. The interval 1-44 is disordered; the sequence is MADKPDMGEIASFDKAKLKKTETQEKNTLPTKETIEQEKRSEIS. A2 carries the N-acetylalanine modification. Position 4 is an N6-acetyllysine (K4). The residue at position 12 (S12) is a Phosphoserine. At K15 the chain carries N6-acetyllysine. Phosphothreonine is present on residues T21, T23, and T34. K39 bears the N6-acetyllysine mark. S41 bears the Phosphoserine mark.

This sequence belongs to the thymosin beta family.

It is found in the cytoplasm. Its subcellular location is the cytoskeleton. In terms of biological role, plays an important role in the organization of the cytoskeleton. Binds to and sequesters actin monomers (G actin) and therefore inhibits actin polymerization. This is Thymosin beta-10 (Tmsb10) from Rattus norvegicus (Rat).